Reading from the N-terminus, the 911-residue chain is DNA mismatch repair protein MutS (911 aa).

Over residues 1-10 (MDNKTDHKND) the composition is skewed to basic and acidic residues. Residues 1-24 (MDNKTDHKNDLNSQPVPSSAPHKE) are disordered. 662–669 (GPNMGGKS) is an ATP binding site.

It belongs to the DNA mismatch repair MutS family.

This protein is involved in the repair of mismatches in DNA. It is possible that it carries out the mismatch recognition step. This protein has a weak ATPase activity. The polypeptide is DNA mismatch repair protein MutS (Bartonella quintana (strain Toulouse) (Rochalimaea quintana)).